The sequence spans 502 residues: ATP synthase subunit alpha, chloroplastic (502 aa).

170-177 (GDRQTGKT) serves as a coordination point for ATP.

The protein belongs to the ATPase alpha/beta chains family. As to quaternary structure, F-type ATPases have 2 components, CF(1) - the catalytic core - and CF(0) - the membrane proton channel. CF(1) has five subunits: alpha(3), beta(3), gamma(1), delta(1), epsilon(1). CF(0) has four main subunits: a, b, b' and c.

Its subcellular location is the plastid. The protein localises to the chloroplast thylakoid membrane. The catalysed reaction is ATP + H2O + 4 H(+)(in) = ADP + phosphate + 5 H(+)(out). Its function is as follows. Produces ATP from ADP in the presence of a proton gradient across the membrane. The alpha chain is a regulatory subunit. In Tupiella akineta (Green alga), this protein is ATP synthase subunit alpha, chloroplastic.